Consider the following 137-residue polypeptide: Small heat shock protein IbpA (137 aa).

Positions 28-137 (TQSNGGYPPY…AMKPRRIEIK (110 aa)) constitute a sHSP domain.

It belongs to the small heat shock protein (HSP20) family. As to quaternary structure, monomer. Forms homomultimers of about 100-150 subunits at optimal growth temperatures. Conformation changes to monomers at high temperatures or high ionic concentrations.

The protein resides in the cytoplasm. Associates with aggregated proteins, together with IbpB, to stabilize and protect them from irreversible denaturation and extensive proteolysis during heat shock and oxidative stress. Aggregated proteins bound to the IbpAB complex are more efficiently refolded and reactivated by the ATP-dependent chaperone systems ClpB and DnaK/DnaJ/GrpE. Its activity is ATP-independent. The sequence is that of Small heat shock protein IbpA from Pectobacterium atrosepticum (strain SCRI 1043 / ATCC BAA-672) (Erwinia carotovora subsp. atroseptica).